The sequence spans 216 residues: Trimethylamine corrinoid protein 1 (216 aa).

The region spanning 1 to 92 (MANKEEIIAK…EMEKRKSQTK (92 aa)) is the B12-binding N-terminal domain. A B12-binding domain is found at 94-216 (LGTIVIGTIE…VVSKVKAALL (123 aa)). H107 lines the methylcob(III)alamin pocket.

This sequence belongs to the methylamine corrinoid protein family. In terms of assembly, can form a complex with MttB.

It participates in one-carbon metabolism; methanogenesis from trimethylamine. Acts probably as a methyl group carrier between MttB and either MtbA or MtaA. The chain is Trimethylamine corrinoid protein 1 (mttC1) from Methanosarcina mazei (strain ATCC BAA-159 / DSM 3647 / Goe1 / Go1 / JCM 11833 / OCM 88) (Methanosarcina frisia).